The chain runs to 1627 residues: Formin-like protein 5 (1627 aa).

Residues 5–194 (RKFFLKKTPD…HYITRQGSGP (190 aa)) form the Phosphatase tensin-type domain. The active-site Phosphocysteine intermediate is Cys-127. The region spanning 200–337 (SRPLILDSIV…FRAEVVFSDP (138 aa)) is the C2 tensin-type domain. 5 disordered regions span residues 370 to 413 (EAEE…LEKH), 680 to 787 (TKRE…YDSS), 801 to 1181 (KFNV…RGVV), 1241 to 1261 (AAVP…SLGS), and 1571 to 1627 (KQAE…KDVG). Basic and acidic residues-rich tracts occupy residues 402–413 (VSREDSGSLEKH), 681–691 (KREESGGRRDV), 700–717 (IEAR…RQIP), and 726–742 (MPVD…EKLG). Pro residues-rich tracts occupy residues 824–835 (APPPPPPPPPPY), 852–870 (QPPP…PPPA), 877–886 (IPPPPPPPPL), 897–908 (VPPPPPPPPPPR), 931–965 (ISPP…PPSA), and 974–1168 (APPP…PPGG). The 401-residue stretch at 1188-1588 (FGAAAARKST…RAEKEAEAEK (401 aa)) folds into the FH2 domain. Basic and acidic residues-rich tracts occupy residues 1248 to 1261 (DSSK…SLGS) and 1571 to 1590 (KQAE…EKSK). Positions 1600 to 1611 (KPSNPSRQVKQT) are enriched in polar residues. Positions 1612–1627 (PDTKTRAASRRGKDVG) are enriched in basic and acidic residues.

It belongs to the formin-like family. Class-II subfamily.

The sequence is that of Formin-like protein 5 (FH5) from Oryza sativa subsp. japonica (Rice).